We begin with the raw amino-acid sequence, 172 residues long: C-phycocyanin beta chain (172 aa).

Asn-72 is subject to N4-methylasparagine. 2 residues coordinate (2R,3E)-phycocyanobilin: Cys-82 and Cys-153.

It belongs to the phycobiliprotein family. As to quaternary structure, heterodimer of an alpha and a beta subunit, which further assembles into trimers and the trimers into hexamers. The basic functional unit of phycobiliproteins is a ring-shaped hexamer formed from two back-to-back trimers contacting via the alpha chain subunits. The trimers are composed of alpha/beta subunit heterodimers arranged around a three-fold axis of symmetry. The phycoerythrins also contain a gamma subunit which is located in the center of the hexamer. Contains two covalently linked bilin chromophores.

It localises to the plastid. Its subcellular location is the chloroplast thylakoid membrane. Light-harvesting photosynthetic bile pigment-protein from the phycobiliprotein complex (phycobilisome, PBS). Phycocyanin is the major phycobiliprotein in the PBS rod. This Pyropia haitanensis (Red seaweed) protein is C-phycocyanin beta chain (cpcB).